A 299-amino-acid polypeptide reads, in one-letter code: MLRLFYFSAIIASVILNFVGIIMNLFITVVNCKTWVKSHRISSSDRILFSLGITRFLMLGLFLVNTIYFVSSNXERSVYLSAFFVLCFMFLDSSSLWFVTLLNILYCVKITNFQHSVFLLLKRNISPKIPRLLLACVLISAFTTCLYITLSQASPFPELVTTRNNTSFNINEGILSLVVSLVLSSSLQFIINVTSASLLIHSLRRHIQKMQKNATGFWNPQTEAHVGAMKLMVYFLILYIPYSVATLVQYLPFYAGMDMGTKSICLIFATLYSPGHSVLIIITHPKLKTTAKKILCFKK.

Residues 1 to 9 (MLRLFYFSA) are Extracellular-facing. A helical membrane pass occupies residues 10–30 (IIASVILNFVGIIMNLFITVV). The Cytoplasmic segment spans residues 31 to 46 (NCKTWVKSHRISSSDR). A helical membrane pass occupies residues 47–67 (ILFSLGITRFLMLGLFLVNTI). At 68-81 (YFVSSNXERSVYLS) the chain is on the extracellular side. The chain crosses the membrane as a helical span at residues 82–102 (AFFVLCFMFLDSSSLWFVTLL). Residues 103-131 (NILYCVKITNFQHSVFLLLKRNISPKIPR) are Cytoplasmic-facing. Residues 132–152 (LLLACVLISAFTTCLYITLSQ) traverse the membrane as a helical segment. The Extracellular segment spans residues 153–172 (ASPFPELVTTRNNTSFNINE). N-linked (GlcNAc...) asparagine glycans are attached at residues N164 and N165. The chain crosses the membrane as a helical span at residues 173 to 193 (GILSLVVSLVLSSSLQFIINV). Residues 194-230 (TSASLLIHSLRRHIQKMQKNATGFWNPQTEAHVGAMK) lie on the Cytoplasmic side of the membrane. Residues 231–251 (LMVYFLILYIPYSVATLVQYL) traverse the membrane as a helical segment. The Extracellular portion of the chain corresponds to 252–262 (PFYAGMDMGTK). Residues 263 to 283 (SICLIFATLYSPGHSVLIIIT) traverse the membrane as a helical segment. Residues 284–299 (HPKLKTTAKKILCFKK) lie on the Cytoplasmic side of the membrane.

This sequence belongs to the G-protein coupled receptor T2R family.

It localises to the membrane. Its subcellular location is the cell projection. The protein localises to the cilium membrane. Gustducin-coupled receptor implicated in the perception of bitter compounds in the oral cavity and the gastrointestinal tract. Signals through PLCB2 and the calcium-regulated cation channel TRPM5. In airway epithelial cells, binding of denatonium increases the intracellular calcium ion concentration and stimulates ciliary beat frequency. This Pan troglodytes (Chimpanzee) protein is Taste receptor type 2 member 4 (TAS2R4).